The chain runs to 212 residues: Thymidylate kinase (212 aa).

Residue 11–18 coordinates ATP; the sequence is GPDGAGKT.

It belongs to the thymidylate kinase family.

It catalyses the reaction dTMP + ATP = dTDP + ADP. Functionally, phosphorylation of dTMP to form dTDP in both de novo and salvage pathways of dTTP synthesis. The sequence is that of Thymidylate kinase from Streptococcus mutans serotype c (strain ATCC 700610 / UA159).